Reading from the N-terminus, the 476-residue chain is MDYLPIFADLKQRPVLVVGGGEVAARKVDLLLRAGAEIRIVAQSLSPILEQLSQQGQIHWLGQAFAAEQLDEVFLVIAATDDSALNAEVFSEADKRRVLANVVDDQPRCSFIFPSIIDRSPLVVAVSSSGQAPVLARMLREKLEALLPASLGQMAEVAGRWRGQVKQRLNAIGERRRFWEKTFGGRFATLVANGQTAEAQRQLEQDLEQFAQGSEGTQGEIALVGAGPGDVGLLTLRGLQVMQQADVVLYDHLVSDEILDLVRRDAERICVGKRAGAHSVIQEETNRLLVELAQQGKRVVRLKGGDPFIFGRGGEELQVAAAAGIPFQVVPGVTAAAGATAYAGIPLTHRDHAQSVTFITGHCRPDGDGLDWADLARARQTLAIYMGTMKAADISQRLIAHGRAATTPVAVISRGTRADQLVQTGTLQQLEQLAQQAPLPALLVIGEVVELHHQIAWFGHQPQAEGVSRPAVVNLA.

Residues 1–203 (MDYLPIFADL…GQTAEAQRQL (203 aa)) form a precorrin-2 dehydrogenase /sirohydrochlorin ferrochelatase region. NAD(+) contacts are provided by residues 22-23 (EV) and 43-44 (QS). Ser-128 is subject to Phosphoserine. The tract at residues 219–476 (GEIALVGAGP…VSRPAVVNLA (258 aa)) is uroporphyrinogen-III C-methyltransferase. Pro-228 serves as a coordination point for S-adenosyl-L-methionine. The active-site Proton acceptor is the Asp-251. Lys-273 functions as the Proton donor in the catalytic mechanism. S-adenosyl-L-methionine-binding positions include 304–306 (GGD), Ile-309, 334–335 (TA), Met-386, and Gly-415.

The protein in the N-terminal section; belongs to the precorrin-2 dehydrogenase / sirohydrochlorin ferrochelatase family. In the C-terminal section; belongs to the precorrin methyltransferase family.

It carries out the reaction uroporphyrinogen III + 2 S-adenosyl-L-methionine = precorrin-2 + 2 S-adenosyl-L-homocysteine + H(+). The catalysed reaction is precorrin-2 + NAD(+) = sirohydrochlorin + NADH + 2 H(+). The enzyme catalyses siroheme + 2 H(+) = sirohydrochlorin + Fe(2+). It functions in the pathway cofactor biosynthesis; adenosylcobalamin biosynthesis; precorrin-2 from uroporphyrinogen III: step 1/1. The protein operates within cofactor biosynthesis; adenosylcobalamin biosynthesis; sirohydrochlorin from precorrin-2: step 1/1. Its pathway is porphyrin-containing compound metabolism; siroheme biosynthesis; precorrin-2 from uroporphyrinogen III: step 1/1. It participates in porphyrin-containing compound metabolism; siroheme biosynthesis; siroheme from sirohydrochlorin: step 1/1. It functions in the pathway porphyrin-containing compound metabolism; siroheme biosynthesis; sirohydrochlorin from precorrin-2: step 1/1. Multifunctional enzyme that catalyzes the SAM-dependent methylations of uroporphyrinogen III at position C-2 and C-7 to form precorrin-2 via precorrin-1. Then it catalyzes the NAD-dependent ring dehydrogenation of precorrin-2 to yield sirohydrochlorin. Finally, it catalyzes the ferrochelation of sirohydrochlorin to yield siroheme. The sequence is that of Siroheme synthase 1 from Serratia proteamaculans (strain 568).